The chain runs to 174 residues: Inner membrane protein p22 (174 aa).

Over 1-7 (MLHIKMT) the chain is Intravirion. The helical transmembrane segment at 8–28 (ISTLLIALIVLLIIILVVFLY) threads the bilayer. Residues 29-174 (HKKQQPPKKV…LYLPRNHKYA (146 aa)) lie on the Virion surface side of the membrane.

It belongs to the asfivirus inner membrane protein p22 family.

Its subcellular location is the virion membrane. The protein resides in the host cell membrane. In African swine fever virus (isolate Pig/Kenya/KEN-50/1950) (ASFV), this protein is Inner membrane protein p22.